Reading from the N-terminus, the 143-residue chain is 3-hydroxyacyl-[acyl-carrier-protein] dehydratase FabZ (143 aa).

The active site involves histidine 49.

This sequence belongs to the thioester dehydratase family. FabZ subfamily.

It localises to the cytoplasm. It carries out the reaction a (3R)-hydroxyacyl-[ACP] = a (2E)-enoyl-[ACP] + H2O. In terms of biological role, involved in unsaturated fatty acids biosynthesis. Catalyzes the dehydration of short chain beta-hydroxyacyl-ACPs and long chain saturated and unsaturated beta-hydroxyacyl-ACPs. This chain is 3-hydroxyacyl-[acyl-carrier-protein] dehydratase FabZ, found in Ehrlichia chaffeensis (strain ATCC CRL-10679 / Arkansas).